A 325-amino-acid chain; its full sequence is Cell wall mannoprotein PIR3 (325 aa).

A signal peptide spans 1–18 (MQYKKPLVVSALAATSLA). Positions 19–67 (AYAPKDPWSTLTPSATYKGGITDYSSSFGIAIEAVATSASSVASSKAKR) are excised as a propeptide. PIR1/2/3 repeat units lie at residues 68–91 (AASQ…KKST), 92–109 (AAAV…AKST), 110–127 (AAAV…AKST), 128–145 (AAAV…AKST), 146–163 (AAAV…AKST), 164–181 (AAAA…TTST), 182–199 (KAAA…SKTT), and 200–217 (SGAS…AEVK).

It belongs to the PIR protein family. In terms of processing, covalently linked to beta-1,3-glucan of the inner cell wall layer via an alkali-sensitive ester linkage between the gamma-carboxyl group of glutamic acids, arising from specific glutamines within the PIR1/2/3 repeats, and hydroxyl groups of glucoses of beta-1,3-glucan chains. O-glycosylated. Extensively O-mannosylated.

The protein localises to the secreted. The protein resides in the cell wall. Functionally, component of the outer cell wall layer. Required for stability of the cell wall and for optimal growth. Required for resistance against several antifungal and cell wall-perturbing agents. This Saccharomyces cerevisiae (strain ATCC 204508 / S288c) (Baker's yeast) protein is Cell wall mannoprotein PIR3 (PIR3).